The primary structure comprises 61 residues: MSKTVVRKNESLDDALRRFKRSVSKTGTLQEYRKREFYEKPSVKRKKKSEAARKRKNKRRF.

The disordered stretch occupies residues 40-61; it reads KPSVKRKKKSEAARKRKNKRRF. The span at 43-61 shows a compositional bias: basic residues; it reads VKRKKKSEAARKRKNKRRF.

The protein belongs to the bacterial ribosomal protein bS21 family.

This chain is Small ribosomal subunit protein bS21, found in Ligilactobacillus salivarius (strain UCC118) (Lactobacillus salivarius).